We begin with the raw amino-acid sequence, 181 residues long: TATA-box-binding protein (181 aa).

2 consecutive repeat copies span residues 7–83 (IVNV…IKEL) and 98–173 (VQNM…LSTL).

The protein belongs to the TBP family.

Its function is as follows. General factor that plays a role in the activation of archaeal genes transcribed by RNA polymerase. Binds specifically to the TATA box promoter element which lies close to the position of transcription initiation. The protein is TATA-box-binding protein (tbp) of Methanothermococcus thermolithotrophicus (Methanococcus thermolithotrophicus).